A 201-amino-acid polypeptide reads, in one-letter code: MNLNLTGAEGTVEVSDVAFAREYNEALVHQVVTSYLAGARQGSRAQKTRSEVAGGGRKPWKQKGSGRARAGTIRSPLWRSGGVTFAAKPQDHSQKVNKKMYRAAMRTIWSELVRQDRLVVVEDLKLEAPKTKLFIAKMAELNIENALIVSHDLDDNLFLAARNIPNVDVRDAASIDPVSLIAYDKVLVTVGALKQVEEALA.

A disordered region spans residues 39–67 (ARQGSRAQKTRSEVAGGGRKPWKQKGSGR).

It belongs to the universal ribosomal protein uL4 family. Part of the 50S ribosomal subunit.

One of the primary rRNA binding proteins, this protein initially binds near the 5'-end of the 23S rRNA. It is important during the early stages of 50S assembly. It makes multiple contacts with different domains of the 23S rRNA in the assembled 50S subunit and ribosome. Its function is as follows. Forms part of the polypeptide exit tunnel. In Marinomonas sp. (strain MWYL1), this protein is Large ribosomal subunit protein uL4.